Consider the following 637-residue polypeptide: Neurexin-3-beta (637 aa).

The N-terminal stretch at methionine 1 to serine 35 is a signal peptide. At serine 36 to threonine 562 the chain is on the extracellular side. Over residues serine 43–histidine 52 the composition is skewed to low complexity. The disordered stretch occupies residues serine 43–histidine 65. The span at histidine 55–histidine 65 shows a compositional bias: basic residues. The 171-residue stretch at alanine 85–valine 255 folds into the Laminin G-like domain. Ca(2+)-binding residues include aspartate 137 and isoleucine 154. N-linked (GlcNAc...) asparagine glycosylation is present at asparagine 184. Ca(2+)-binding residues include isoleucine 206 and asparagine 208. Residues asparagine 252 and asparagine 296 are each glycosylated (N-linked (GlcNAc...) asparagine). The tract at residues alanine 289–valine 310 is disordered. Positions serine 298–valine 310 are enriched in polar residues. Serine 312 is a glycosylation site (O-linked (Xyl...) (heparan sulfate) serine). A helical transmembrane segment spans residues glycine 563–methionine 583. Over tyrosine 584–valine 637 the chain is Cytoplasmic. Residues asparagine 605–valine 637 form a disordered region.

Belongs to the neurexin family. In terms of assembly, weakly interacts with CBLN1 and CBLN2. Very weak binding, if any, to CBLN4. Specific isoforms bind neuroligins NLGN1, NLGN2 and NLGN3. Interacts with CLSTN3. Processed by alpha-secretase leading to the formation of an extracellular soluble protein as well as a C-terminal membrane-embedded fragment (CTF). Proteolysis of these CTFs by gamma-secretase releases intracellular domains (ICDs) and extracellular peptides. In terms of processing, O-glycosylated; contains heparan sulfate. Heparan sulfate attachment is required for synapse development by mediating interactions with neuroligins. As to expression, expressed in the blood vessel walls (at protein level).

It is found in the presynaptic cell membrane. Its function is as follows. Neuronal cell surface protein that may be involved in cell recognition and cell adhesion. May mediate intracellular signaling. Functions as part of a trans-synaptic complex by binding to cerebellins and postsynaptic GRID1. This interaction helps regulate the activity of NMDA and AMPA receptors at hippocampal synapses without affecting synapse formation. NRXN3B-CBLN2-GRID1 complex transduce presynaptic signals into postsynaptic AMPAR response. The chain is Neurexin-3-beta from Homo sapiens (Human).